A 266-amino-acid chain; its full sequence is DNA-directed RNA polymerase subunit Rpo3 (266 aa).

Cys205, Cys208, and Cys211 together coordinate [3Fe-4S] cluster.

It belongs to the archaeal Rpo3/eukaryotic RPB3 RNA polymerase subunit family. Part of the RNA polymerase complex. [3Fe-4S] cluster is required as a cofactor.

It is found in the cytoplasm. It carries out the reaction RNA(n) + a ribonucleoside 5'-triphosphate = RNA(n+1) + diphosphate. In terms of biological role, DNA-dependent RNA polymerase (RNAP) catalyzes the transcription of DNA into RNA using the four ribonucleoside triphosphates as substrates. This is DNA-directed RNA polymerase subunit Rpo3 from Methanosarcina mazei (strain ATCC BAA-159 / DSM 3647 / Goe1 / Go1 / JCM 11833 / OCM 88) (Methanosarcina frisia).